Consider the following 241-residue polypeptide: MGQKIHPIGFRLGITADHKSCWYADSKRYPETLQEDRQIRQYITKNLSNAGISDIRIERKADQVDLAIHTARPGVVVGRGGSGIEQLRLGLQQDLGGNRQIRINVIEVQRVDADAMLIAEYITQQLERRVSFRRVVRQAIQRAQRAEVKGIKIQVSGRLNGAEIARTEWVREGRVPLHTLRADIDYAYRTAQTIYGILGVKVWVFKGEIIPGQEEIPMPVPSQTPRRQRRRQQFEDRSGEE.

Residues 39–109 (IRQYITKNLS…QIRINVIEVQ (71 aa)) form the KH type-2 domain. A disordered region spans residues 214–241 (EEIPMPVPSQTPRRQRRRQQFEDRSGEE). Basic and acidic residues predominate over residues 232-241 (QQFEDRSGEE).

Belongs to the universal ribosomal protein uS3 family. In terms of assembly, part of the 30S ribosomal subunit. Forms a tight complex with proteins S10 and S14.

Its function is as follows. Binds the lower part of the 30S subunit head. Binds mRNA in the 70S ribosome, positioning it for translation. The chain is Small ribosomal subunit protein uS3 from Rippkaea orientalis (strain PCC 8801 / RF-1) (Cyanothece sp. (strain PCC 8801)).